The chain runs to 228 residues: Ribosomal RNA small subunit methyltransferase G (228 aa).

Residues G89, L94, 140–141 (VE), and R159 each bind S-adenosyl-L-methionine.

Belongs to the methyltransferase superfamily. RNA methyltransferase RsmG family.

The protein resides in the cytoplasm. The catalysed reaction is guanosine(527) in 16S rRNA + S-adenosyl-L-methionine = N(7)-methylguanosine(527) in 16S rRNA + S-adenosyl-L-homocysteine. Specifically methylates the N7 position of guanine in position 527 of 16S rRNA. The protein is Ribosomal RNA small subunit methyltransferase G of Burkholderia cenocepacia (strain HI2424).